The primary structure comprises 251 residues: Adenosine 5'-phosphosulfate reductase (251 aa).

[4Fe-4S] cluster contacts are provided by Cys-121, Cys-122, Cys-204, and Cys-207. Cys-232 serves as the catalytic Nucleophile; cysteine thiosulfonate intermediate.

The protein belongs to the PAPS reductase family. CysH subfamily. The cofactor is [4Fe-4S] cluster.

It is found in the cytoplasm. It carries out the reaction [thioredoxin]-disulfide + sulfite + AMP + 2 H(+) = adenosine 5'-phosphosulfate + [thioredoxin]-dithiol. It functions in the pathway sulfur metabolism; hydrogen sulfide biosynthesis; sulfite from sulfate. Catalyzes the formation of sulfite from adenosine 5'-phosphosulfate (APS) using thioredoxin as an electron donor. The protein is Adenosine 5'-phosphosulfate reductase of Sinorhizobium fredii (strain NBRC 101917 / NGR234).